Reading from the N-terminus, the 160-residue chain is Small ribosomal subunit protein uS7 (160 aa).

It belongs to the universal ribosomal protein uS7 family. As to quaternary structure, part of the 30S ribosomal subunit. Contacts proteins S9 and S11.

In terms of biological role, one of the primary rRNA binding proteins, it binds directly to 16S rRNA where it nucleates assembly of the head domain of the 30S subunit. Is located at the subunit interface close to the decoding center, probably blocks exit of the E-site tRNA. The protein is Small ribosomal subunit protein uS7 of Rickettsia massiliae (strain Mtu5).